Here is a 401-residue protein sequence, read N- to C-terminus: NADH-dependent flavin oxidoreductase iliE (401 aa).

Residues 25–28 (ASMS) and Gln-107 contribute to the FMN site. Residue 188 to 191 (HAAH) participates in substrate binding. Residue 346–347 (AR) participates in FMN binding.

It belongs to the NADH:flavin oxidoreductase/NADH oxidase family.

NADH-dependent flavin oxidoreductase; part of the gene cluster that mediates the biosynthesis of ilicicolin H, a 4-hydroxy-2-pyridonealkaloid that has potent and broad antifungal activities by inhibiting the mitochondrial respiration chain. The biosynthesis of ilicicolin H starts with formation of the tetramic acid by the hybrid PKS-NRPS synthetase iliA with the partnering trans-enoyl reductase iliB since iliA lacks a designated enoylreductase (ER) domain. The cytochrome P450 monooxygenase iliC then catalyzes the ring expansion of the tetramate to the acyclic 2-pyridone. The pericyclase iliD further converts the acyclic 2-pyridone into 8-epi-ilicicolin H. 8-epi-ilicicolin H might then spontaneously convert to ilicicolin H since ilicicolin H is produced in the absence of the epimerase iliE, in contrast to what was observed for the Talaromyces variabilis ilicolin H biosynthetic pathway. The protein is NADH-dependent flavin oxidoreductase iliE of Hypocrea jecorina (strain QM6a) (Trichoderma reesei).